A 308-amino-acid chain; its full sequence is uncharacterized protein (308 aa).

A coiled-coil region spans residues 212 to 242; the sequence is EADKMTIDYMRELDNLQRQYDGLVDEDKALH.

This is an uncharacterized protein from Ostreid herpesvirus 1 (isolate France) (OsHV-1).